The chain runs to 234 residues: Meiotically up-regulated gene 35 protein (234 aa).

A compositionally biased stretch (basic and acidic residues) spans 126-156 (DSSGDLTSTDKERDVSPVSHSEKPYWDRYDL). Residues 126 to 176 (DSSGDLTSTDKERDVSPVSHSEKPYWDRYDLDQPSNQDVEESRNLVQEPKH) form a disordered region. Phosphoserine occurs at positions 127 and 128. T132 bears the Phosphothreonine mark. At S141 the chain carries Phosphoserine.

It is found in the cytoplasm. In terms of biological role, has a role in meiosis. The protein is Meiotically up-regulated gene 35 protein (mug35) of Schizosaccharomyces pombe (strain 972 / ATCC 24843) (Fission yeast).